Here is a 110-residue protein sequence, read N- to C-terminus: Large ribosomal subunit protein uL22 (110 aa).

Belongs to the universal ribosomal protein uL22 family. In terms of assembly, part of the 50S ribosomal subunit.

Its function is as follows. This protein binds specifically to 23S rRNA; its binding is stimulated by other ribosomal proteins, e.g. L4, L17, and L20. It is important during the early stages of 50S assembly. It makes multiple contacts with different domains of the 23S rRNA in the assembled 50S subunit and ribosome. In terms of biological role, the globular domain of the protein is located near the polypeptide exit tunnel on the outside of the subunit, while an extended beta-hairpin is found that lines the wall of the exit tunnel in the center of the 70S ribosome. This is Large ribosomal subunit protein uL22 from Aliivibrio fischeri (strain MJ11) (Vibrio fischeri).